A 385-amino-acid polypeptide reads, in one-letter code: 8-amino-7-oxononanoate synthase (385 aa).

Arg-21 contacts substrate. 108–109 (GF) is a binding site for pyridoxal 5'-phosphate. His-133 contacts substrate. Pyridoxal 5'-phosphate-binding residues include Ser-179, His-207, and Thr-233. N6-(pyridoxal phosphate)lysine is present on Lys-236. Residue Thr-352 participates in substrate binding.

The protein belongs to the class-II pyridoxal-phosphate-dependent aminotransferase family. BioF subfamily. In terms of assembly, homodimer. Pyridoxal 5'-phosphate serves as cofactor.

The enzyme catalyses 6-carboxyhexanoyl-[ACP] + L-alanine + H(+) = (8S)-8-amino-7-oxononanoate + holo-[ACP] + CO2. It participates in cofactor biosynthesis; biotin biosynthesis. In terms of biological role, catalyzes the decarboxylative condensation of pimeloyl-[acyl-carrier protein] and L-alanine to produce 8-amino-7-oxononanoate (AON), [acyl-carrier protein], and carbon dioxide. This Salmonella enteritidis PT4 (strain P125109) protein is 8-amino-7-oxononanoate synthase.